Consider the following 240-residue polypeptide: Aquaporin Z (240 aa).

The next 2 membrane-spanning stretches (helical) occupy residues 10–30 (MIGT…AAGF) and 35–55 (IGLV…AYAI). Positions 64–66 (NPA) match the NPA 1 motif. The next 3 membrane-spanning stretches (helical) occupy residues 90–110 (VLGA…AAGF), 131–151 (LVAC…VIMG), and 160–180 (GFAP…SIPV). The NPA 2 signature appears at 186 to 188 (NPA). The chain crosses the membrane as a helical span at residues 202–222 (IGQLWLFWVAPLLGGVLGGVI).

Belongs to the MIP/aquaporin (TC 1.A.8) family. In terms of assembly, homotetramer.

Its subcellular location is the cell inner membrane. It catalyses the reaction H2O(in) = H2O(out). Functionally, channel that permits osmotically driven movement of water in both directions. It is involved in the osmoregulation and in the maintenance of cell turgor during volume expansion in rapidly growing cells. It mediates rapid entry or exit of water in response to abrupt changes in osmolarity. The protein is Aquaporin Z of Rhodopseudomonas palustris (strain ATCC BAA-98 / CGA009).